The primary structure comprises 374 residues: Probable plastid-lipid-associated protein 3, chloroplastic (374 aa).

The N-terminal 46 residues, 1–46, are a transit peptide targeting the chloroplast; the sequence is MAMPPPLFAAASHASLLLPSPTIHSSTGSRRPFRLPLRSSRRPPVA. A disordered region spans residues 19 to 148; it reads PSPTIHSSTG…EDNEEERREE (130 aa). The span at 28–54 shows a compositional bias: low complexity; the sequence is GSRRPFRLPLRSSRRPPVAAAAASGVP. Composition is skewed to pro residues over residues 64–73 and 127–136; these read APEPPSQPDP and PAPPPPPPPV.

This sequence belongs to the PAP/fibrillin family.

It is found in the plastid. The protein localises to the chloroplast. This Oryza sativa subsp. japonica (Rice) protein is Probable plastid-lipid-associated protein 3, chloroplastic (PAP3).